The chain runs to 235 residues: Thiamine import ATP-binding protein ThiQ (235 aa).

The region spanning 2 to 230 (LKLIDITWLY…QASASALLGI (229 aa)) is the ABC transporter domain. 32–39 (GPSGAGKS) contacts ATP.

This sequence belongs to the ABC transporter superfamily. Thiamine importer (TC 3.A.1.19.1) family. In terms of assembly, the complex is composed of two ATP-binding proteins (ThiQ), two transmembrane proteins (ThiP) and a solute-binding protein (ThiB).

The protein resides in the cell inner membrane. The enzyme catalyses thiamine(out) + ATP + H2O = thiamine(in) + ADP + phosphate + H(+). Its function is as follows. Part of the ABC transporter complex ThiBPQ involved in thiamine import. Responsible for energy coupling to the transport system. This Salmonella paratyphi A (strain ATCC 9150 / SARB42) protein is Thiamine import ATP-binding protein ThiQ.